The sequence spans 346 residues: Biotin synthase (346 aa).

In terms of domain architecture, Radical SAM core spans 36-265 (YFGRQVMLHR…KAEIRIGGGR (230 aa)). 3 residues coordinate [4Fe-4S] cluster: Cys-54, Cys-58, and Cys-61. [2Fe-2S] cluster-binding residues include Cys-98, Cys-130, Cys-190, and Arg-260.

It belongs to the radical SAM superfamily. Biotin synthase family. As to quaternary structure, homodimer. The cofactor is [4Fe-4S] cluster. [2Fe-2S] cluster serves as cofactor.

It carries out the reaction (4R,5S)-dethiobiotin + (sulfur carrier)-SH + 2 reduced [2Fe-2S]-[ferredoxin] + 2 S-adenosyl-L-methionine = (sulfur carrier)-H + biotin + 2 5'-deoxyadenosine + 2 L-methionine + 2 oxidized [2Fe-2S]-[ferredoxin]. It functions in the pathway cofactor biosynthesis; biotin biosynthesis; biotin from 7,8-diaminononanoate: step 2/2. Catalyzes the conversion of dethiobiotin (DTB) to biotin by the insertion of a sulfur atom into dethiobiotin via a radical-based mechanism. This is Biotin synthase from Acaryochloris marina (strain MBIC 11017).